Reading from the N-terminus, the 195-residue chain is Interferon omega-2 (195 aa).

A signal peptide spans 1–23 (MALLPSLLTALVVYELWPCGALG). 2 disulfide bridges follow: Cys-24–Cys-122 and Cys-52–Cys-162. The N-linked (GlcNAc...) asparagine glycan is linked to Asn-101.

It belongs to the alpha/beta interferon family.

Its subcellular location is the secreted. The sequence is that of Interferon omega-2 from Equus caballus (Horse).